Consider the following 391-residue polypeptide: Pectate lyase D (391 aa).

A signal peptide spans 1 to 31 (MNNTRVSFRSTKSLLAAIIATSMMTWSVNRA). Residues aspartate 170 and aspartate 213 each contribute to the Ca(2+) site. Arginine 266 is a catalytic residue.

This sequence belongs to the polysaccharide lyase 1 family. PLBC subfamily. It depends on Ca(2+) as a cofactor.

It localises to the secreted. The catalysed reaction is Eliminative cleavage of (1-&gt;4)-alpha-D-galacturonan to give oligosaccharides with 4-deoxy-alpha-D-galact-4-enuronosyl groups at their non-reducing ends.. Its pathway is glycan metabolism; pectin degradation; 2-dehydro-3-deoxy-D-gluconate from pectin: step 2/5. In terms of biological role, involved in maceration and soft-rotting of plant tissue. The polypeptide is Pectate lyase D (pelD) (Dickeya chrysanthemi (Pectobacterium chrysanthemi)).